The sequence spans 215 residues: Ribonuclease T (215 aa).

The region spanning 20-194 (VVIDVETAGF…YDTERTAVLF (175 aa)) is the Exonuclease domain. Residues Asp23, Glu25, His181, and Asp186 each coordinate Mg(2+). Residue His181 is the Proton donor/acceptor of the active site.

The protein belongs to the RNase T family. In terms of assembly, homodimer. Mg(2+) is required as a cofactor.

In terms of biological role, trims short 3' overhangs of a variety of RNA species, leaving a one or two nucleotide 3' overhang. Responsible for the end-turnover of tRNA: specifically removes the terminal AMP residue from uncharged tRNA (tRNA-C-C-A). Also appears to be involved in tRNA biosynthesis. This chain is Ribonuclease T, found in Citrobacter koseri (strain ATCC BAA-895 / CDC 4225-83 / SGSC4696).